The following is a 115-amino-acid chain: Cholecystokinin (115 aa).

The first 20 residues, 1–20, serve as a signal peptide directing secretion; the sequence is MNSGVSLCVLMAVLAAGALT. Residues 21-44 constitute a propeptide that is removed on maturation; it reads QPVPPAEPAGSGLQRAEEAPRRQL. Residues 21–51 are disordered; sequence QPVPPAEPAGSGLQRAEEAPRRQLRAVQRTD. The O-linked (Xyl...) (chondroitin sulfate) serine glycan is linked to serine 31. Tyrosine 97 carries the sulfotyrosine modification. Phenylalanine 103 is subject to Phenylalanine amide. Positions 107–115 are excised as a propeptide; sequence SAEEYEYPS. A sulfotyrosine mark is found at tyrosine 111 and tyrosine 113.

The protein belongs to the gastrin/cholecystokinin family. In terms of assembly, binds to CCK-A receptors in the pancreas and CCK-B receptors in the brain. Post-translationally, the precursor is cleaved by proteases to produce a number of active cholecystokinins. The precursor is cleaved by ACE, which removes the Gly-Arg-Arg peptide at the C-terminus, leading to mature hormone.

The protein localises to the secreted. Its function is as follows. This peptide hormone induces gall bladder contraction and the release of pancreatic enzymes in the gut. Its function in the brain is not clear. Binding to CCK-A receptors stimulates amylase release from the pancreas, binding to CCK-B receptors stimulates gastric acid secretion. This is Cholecystokinin (CCK) from Macaca fascicularis (Crab-eating macaque).